Reading from the N-terminus, the 499-residue chain is Endoglucanase 3 (499 aa).

Residues 1–19 (MALLRCLFLLAVLLPHRNA) form the signal peptide. Asp88 serves as the catalytic Nucleophile. Catalysis depends on residues His416, Asp467, and Glu476.

This sequence belongs to the glycosyl hydrolase 9 (cellulase E) family. Expressed in flowers.

It localises to the secreted. The catalysed reaction is Endohydrolysis of (1-&gt;4)-beta-D-glucosidic linkages in cellulose, lichenin and cereal beta-D-glucans.. This chain is Endoglucanase 3 (GLU8), found in Oryza sativa subsp. japonica (Rice).